Reading from the N-terminus, the 700-residue chain is Methionine--tRNA ligase (700 aa).

The 'HIGH' region motif lies at 14–24 (PYANGPVHLGH). Zn(2+) contacts are provided by C146, C149, C159, and C162. The 'KMSKS' region signature appears at 343–347 (KFSKS). An ATP-binding site is contributed by K346. A tRNA-binding domain is found at 599-700 (EFEKIDLRVA…GDSIVGKPVK (102 aa)).

This sequence belongs to the class-I aminoacyl-tRNA synthetase family. MetG type 1 subfamily. As to quaternary structure, homodimer. Zn(2+) is required as a cofactor.

The protein resides in the cytoplasm. The enzyme catalyses tRNA(Met) + L-methionine + ATP = L-methionyl-tRNA(Met) + AMP + diphosphate. Is required not only for elongation of protein synthesis but also for the initiation of all mRNA translation through initiator tRNA(fMet) aminoacylation. The sequence is that of Methionine--tRNA ligase from Chloroherpeton thalassium (strain ATCC 35110 / GB-78).